The primary structure comprises 401 residues: Inactive leucine-rich repeat receptor-like protein kinase CORYNE (401 aa).

The signal sequence occupies residues 1-33 (MKQRRRRNGCSSSNTISLLLLFFLVFFSRTSTS). Topologically, residues 34 to 62 (TSCRRRTVKHLSTTSTSSTPLESRITSKV) are extracellular. Residues 63 to 83 (IVISIVSGILTGLVSALVLAF) form a helical membrane-spanning segment. Residues 84–401 (LVRSIVKFMK…VHMLTQLHSF (318 aa)) lie on the Cytoplasmic side of the membrane. One can recognise a Protein kinase domain in the interval 118-401 (SNGIQLLGSD…VHMLTQLHSF (284 aa)). ATP contacts are provided by residues 124–132 (LGSDLNGKY) and Lys146.

Belongs to the protein kinase superfamily. Ser/Thr protein kinase family. In terms of assembly, self-interacts. Parts of a tetrameric complex made of two CLV2/CRN heterodimers that can interact with CLV3 and CLE peptides. CLV2/CRN heterodimer interacts with CLV1 homodimers. Interacts with CLV1 and CLV2. CLV2/CRN heterodimer can interact with BAM3. Present in roots, stems, leaves, inflorescence, flowers and siliques. Mostly expressed in shoot tips and, to a lesser extent, in young organs and roots. Also expressed in the inner tissues of the proximal root meristem. Expressed in the vascular cylinder of root tips, mostly in phloem poles.

The protein localises to the cell membrane. It localises to the endoplasmic reticulum membrane. Its function is as follows. Involved in the perception of CLV3 and CLV3-like (CLE) peptides, that act as extracellular signals regulating meristem maintenance. Modulates root, shoot and flower apical meristem maintenance and floral organ development regulation, probably via CLAVATA (CLV)-like pathways involving at least CLV3 and CLE19. In complex with CLV2, perceives secreted CLV3-like effector proteins from plant-parasitic cyst nematodes as ligand mimics of the plant CLE signaling pathway. This recognition is required for proper feeding structure (syncytium) development and ultimately successful nematode infection. CLE14 perception by CLV2/CRN complex triggers root meristem differentiation. Required for the sensing of the root CLE peptides (e.g. CLE8, CLE9/CLE10, CLE11, CLE13, CLE14, CLE16, CLE17, CLE18, CLE20, CLE21, CLE25, CLE26, CLE40, CLE41/CLE44 and CLE45), which also involves CLV2 and leads to root growth regulation, mostly in the phloem and protophloem. Promotes the accumulation of BAM3, especially at later stages of protophloem development. The protein is Inactive leucine-rich repeat receptor-like protein kinase CORYNE of Arabidopsis thaliana (Mouse-ear cress).